The sequence spans 113 residues: Protein translation factor SUI1 homolog (113 aa).

The tract at residues Met-1–Gly-24 is disordered. Ser-2 carries the N-acetylserine modification.

It belongs to the SUI1 family.

Probably involved in translation. The chain is Protein translation factor SUI1 homolog from Brassica oleracea (Wild cabbage).